The chain runs to 212 residues: Large ribosomal subunit protein uL4 (212 aa).

It belongs to the universal ribosomal protein uL4 family. In terms of assembly, part of the 50S ribosomal subunit.

Functionally, one of the primary rRNA binding proteins, this protein initially binds near the 5'-end of the 23S rRNA. It is important during the early stages of 50S assembly. It makes multiple contacts with different domains of the 23S rRNA in the assembled 50S subunit and ribosome. In terms of biological role, forms part of the polypeptide exit tunnel. This is Large ribosomal subunit protein uL4 from Caulobacter sp. (strain K31).